Here is a 245-residue protein sequence, read N- to C-terminus: Putative binding protein HI_1525 (245 aa).

The signal sequence occupies residues 1–19 (MKKLVAVTSMILTTFSVQA). 2 residues coordinate molybdate: Ser56 and Val163.

It belongs to the bacterial solute-binding protein ModA family.

Its subcellular location is the periplasm. Probably involved in the binding-dependent system. This chain is Putative binding protein HI_1525, found in Haemophilus influenzae (strain ATCC 51907 / DSM 11121 / KW20 / Rd).